A 52-amino-acid polypeptide reads, in one-letter code: ATP synthase protein 8 (52 aa).

Residues 6-26 (PINGFVILCSISLMLLTLLIN) form a helical membrane-spanning segment.

Belongs to the ATPase protein 8 family. As to quaternary structure, F-type ATPases have 2 components, CF(1) - the catalytic core - and CF(0) - the membrane proton channel.

It is found in the mitochondrion membrane. Functionally, mitochondrial membrane ATP synthase (F(1)F(0) ATP synthase or Complex V) produces ATP from ADP in the presence of a proton gradient across the membrane which is generated by electron transport complexes of the respiratory chain. F-type ATPases consist of two structural domains, F(1) - containing the extramembraneous catalytic core and F(0) - containing the membrane proton channel, linked together by a central stalk and a peripheral stalk. During catalysis, ATP synthesis in the catalytic domain of F(1) is coupled via a rotary mechanism of the central stalk subunits to proton translocation. Part of the complex F(0) domain. Minor subunit located with subunit a in the membrane. This is ATP synthase protein 8 (MT-ATP8) from Albinaria turrita (Door snail).